The sequence spans 305 residues: MSFTDTPDGFRSGFVSFVGRPNTGKSTLTNALVGEKIAITANQPETTRHPIRGLVHRDNAQIIVVDTPGLHRPRTLLGERLNEAVKDTYADVDLIGFTVPANEKIGPGDRWILEAVRKVSPKTPILGIITKADSVSRDLVAAQLMAVHELLGGNSEVVPVSSTSGENVETLIKVMTDLLPEGPKFYPDDHITDEDTNTRIAEAIREAALSGLKNELPHSVAVEVDEILPDPERNGVLAVHAIIYVERVGQKDIIVGHKGQRLGRIIHTSRQDIIKILGQNVFLDLRIKVLKNWQSDPKALNRLGF.

The 171-residue stretch at 11 to 181 (RSGFVSFVGR…IKVMTDLLPE (171 aa)) folds into the Era-type G domain. Positions 19–26 (GRPNTGKS) are G1. 19-26 (GRPNTGKS) contacts GTP. The tract at residues 45-49 (ETTRH) is G2. The G3 stretch occupies residues 66–69 (DTPG). GTP-binding positions include 66-70 (DTPGL) and 130-133 (TKAD). The tract at residues 130 to 133 (TKAD) is G4. A G5 region spans residues 160–162 (VSS). Positions 212-291 (LKNELPHSVA…FLDLRIKVLK (80 aa)) constitute a KH type-2 domain.

Belongs to the TRAFAC class TrmE-Era-EngA-EngB-Septin-like GTPase superfamily. Era GTPase family. Monomer.

Its subcellular location is the cytoplasm. It is found in the cell membrane. In terms of biological role, an essential GTPase that binds both GDP and GTP, with rapid nucleotide exchange. Plays a role in 16S rRNA processing and 30S ribosomal subunit biogenesis and possibly also in cell cycle regulation and energy metabolism. This Corynebacterium glutamicum (strain ATCC 13032 / DSM 20300 / JCM 1318 / BCRC 11384 / CCUG 27702 / LMG 3730 / NBRC 12168 / NCIMB 10025 / NRRL B-2784 / 534) protein is GTPase Era.